We begin with the raw amino-acid sequence, 75 residues long: Conotoxin Vc6a (75 aa).

A signal peptide spans 1–22; the sequence is MKLTCVVIVAVLFLTANTFATA. A propeptide spanning residues 23–49 is cleaved from the precursor; that stretch reads DDPRNGLENLFLKAHHEMNPEASKLNE. Intrachain disulfides connect Cys51/Cys66, Cys58/Cys69, and Cys65/Cys74.

As to expression, expressed by the venom duct.

The protein localises to the secreted. This Conus victoriae (Queen Victoria cone) protein is Conotoxin Vc6a.